We begin with the raw amino-acid sequence, 359 residues long: Probable D-xylulose reductase A (359 aa).

The Zn(2+) site is built by cysteine 47, histidine 72, and glutamate 73. NAD(+) is bound at residue 182–187; it reads GAGPVG.

This sequence belongs to the zinc-containing alcohol dehydrogenase family. It depends on Zn(2+) as a cofactor.

The catalysed reaction is xylitol + NAD(+) = D-xylulose + NADH + H(+). It functions in the pathway carbohydrate degradation; L-arabinose degradation via L-arabinitol; D-xylulose 5-phosphate from L-arabinose (fungal route): step 4/5. In terms of biological role, xylitol dehydrogenase which catalyzes the conversion of xylitol to D-xylulose. Xylose is a major component of hemicelluloses such as xylan. Most fungi utilize D-xylose via three enzymatic reactions, xylose reductase (XR), xylitol dehydrogenase (XDH), and xylulokinase, to form xylulose 5-phosphate, which enters pentose phosphate pathway. This is Probable D-xylulose reductase A (xdhA) from Emericella nidulans (strain FGSC A4 / ATCC 38163 / CBS 112.46 / NRRL 194 / M139) (Aspergillus nidulans).